Reading from the N-terminus, the 114-residue chain is Nucleoid-associated protein Tlet_0999 (114 aa).

The protein belongs to the YbaB/EbfC family. In terms of assembly, homodimer.

The protein resides in the cytoplasm. The protein localises to the nucleoid. Binds to DNA and alters its conformation. May be involved in regulation of gene expression, nucleoid organization and DNA protection. This Pseudothermotoga lettingae (strain ATCC BAA-301 / DSM 14385 / NBRC 107922 / TMO) (Thermotoga lettingae) protein is Nucleoid-associated protein Tlet_0999.